Here is a 309-residue protein sequence, read N- to C-terminus: 15-cis-phytoene synthase (309 aa).

The interval Leu290 to Leu309 is disordered.

This sequence belongs to the phytoene/squalene synthase family. It depends on ATP as a cofactor. Mn(2+) is required as a cofactor. The cofactor is Mg(2+).

The enzyme catalyses 2 (2E,6E,10E)-geranylgeranyl diphosphate = 15-cis-phytoene + 2 diphosphate. The protein operates within carotenoid biosynthesis; phytoene biosynthesis. Its activity is regulated as follows. Inhibited by phosphate ions and squalestatin. Its function is as follows. Involved in the biosynthesis of carotenoids. Catalyzes the condensation of two molecules of geranylgeranyl diphosphate (GGPP) to give prephytoene diphosphate (PPPP) and the subsequent rearrangement of the cyclopropylcarbinyl intermediate to yield the 15-cis-phytoene isomer. This Pantoea ananas (Erwinia uredovora) protein is 15-cis-phytoene synthase (crtB).